Here is a 72-residue protein sequence, read N- to C-terminus: Translation initiation factor IF-1 (72 aa).

Residues 1-72 enclose the S1-like domain; sequence MAKEDSIEMQ…SKGRIVFRSR (72 aa).

Belongs to the IF-1 family. In terms of assembly, component of the 30S ribosomal translation pre-initiation complex which assembles on the 30S ribosome in the order IF-2 and IF-3, IF-1 and N-formylmethionyl-tRNA(fMet); mRNA recruitment can occur at any time during PIC assembly.

The protein resides in the cytoplasm. Its function is as follows. One of the essential components for the initiation of protein synthesis. Stabilizes the binding of IF-2 and IF-3 on the 30S subunit to which N-formylmethionyl-tRNA(fMet) subsequently binds. Helps modulate mRNA selection, yielding the 30S pre-initiation complex (PIC). Upon addition of the 50S ribosomal subunit IF-1, IF-2 and IF-3 are released leaving the mature 70S translation initiation complex. The polypeptide is Translation initiation factor IF-1 (Aeromonas hydrophila subsp. hydrophila (strain ATCC 7966 / DSM 30187 / BCRC 13018 / CCUG 14551 / JCM 1027 / KCTC 2358 / NCIMB 9240 / NCTC 8049)).